We begin with the raw amino-acid sequence, 307 residues long: MAVQKYTVALFLVALVVGPAASYAADLSYGAPATPAAPAAGYTPAAPAGAAPKATTDEQKMIEKINVGFKAAVAAAGGVPAANKYKTFVATFGAASNKAFAEALSTEPKGAAVDSSKAALTSKLDAAYKLAYKSAEGATPEAKYDDYVATLSEALRIIAGTLEVHGVKPAAEEVKATPAGELQVIDKVDAAFKVAATAANAAPANDKFTVFEAAFNDAIKASTGGAYQSYKFIPALEAAVKQSYAATVATAPAVKYTVFETALKKAITAMSQAQKAAKPAAAATGTATAAVGAATGAATAAAGGYKV.

The signal sequence occupies residues 1 to 22 (MAVQKYTVALFLVALVVGPAAS).

It belongs to the Poa p IX/Phl p VI allergen family. As to expression, pollen.

The sequence is that of Pollen allergen KBG 60 from Poa pratensis (Kentucky bluegrass).